Reading from the N-terminus, the 311-residue chain is Porphobilinogen deaminase (311 aa).

Cys242 bears the S-(dipyrrolylmethanemethyl)cysteine mark.

Belongs to the HMBS family. In terms of assembly, monomer. Dipyrromethane serves as cofactor.

The catalysed reaction is 4 porphobilinogen + H2O = hydroxymethylbilane + 4 NH4(+). The protein operates within porphyrin-containing compound metabolism; protoporphyrin-IX biosynthesis; coproporphyrinogen-III from 5-aminolevulinate: step 2/4. Tetrapolymerization of the monopyrrole PBG into the hydroxymethylbilane pre-uroporphyrinogen in several discrete steps. In Vibrio cholerae serotype O1 (strain ATCC 39315 / El Tor Inaba N16961), this protein is Porphobilinogen deaminase (hemC).